The following is an 83-amino-acid chain: Keratin-associated protein 6-1 (83 aa).

An RPT 1-1 repeat occupies 9–15 (YGGLGCG). One copy of the RPT 1-2 repeat lies at 19–25 (YGGLGCG). The RPT 2-1 repeat unit spans residues 44–55 (GYGYGSRSLCGS). The stretch at 56-67 (GYGYGSRSLCGS) is one RPT 2-2 repeat.

This sequence belongs to the KRTAP type 6 family. As to quaternary structure, interacts with wool keratins.

In terms of biological role, in the wool cortex, wool keratin intermediate filaments are embedded in an interfilamentous matrix, consisting of hair keratin-associated proteins (KRTAP), which are essential for the formation of a rigid and resistant wool shaft through their extensive disulfide bond cross-linking with abundant cysteine residues of wool keratins. The matrix proteins include the high-sulfur and high-glycine-tyrosine keratins. In Ovis aries (Sheep), this protein is Keratin-associated protein 6-1 (KRTAP6-1).